Consider the following 370-residue polypeptide: Histidinol-phosphate aminotransferase (370 aa).

At Lys-220 the chain carries N6-(pyridoxal phosphate)lysine.

This sequence belongs to the class-II pyridoxal-phosphate-dependent aminotransferase family. Histidinol-phosphate aminotransferase subfamily. As to quaternary structure, homodimer. The cofactor is pyridoxal 5'-phosphate.

It carries out the reaction L-histidinol phosphate + 2-oxoglutarate = 3-(imidazol-4-yl)-2-oxopropyl phosphate + L-glutamate. Its pathway is amino-acid biosynthesis; L-histidine biosynthesis; L-histidine from 5-phospho-alpha-D-ribose 1-diphosphate: step 7/9. In Granulibacter bethesdensis (strain ATCC BAA-1260 / CGDNIH1), this protein is Histidinol-phosphate aminotransferase.